A 556-amino-acid chain; its full sequence is Oxygen-dependent choline dehydrogenase (556 aa).

An FAD-binding site is contributed by 6–35 (DYIIIGAGSAGNVLAARLTEDPGVTVLLLE). His-475 functions as the Proton acceptor in the catalytic mechanism.

This sequence belongs to the GMC oxidoreductase family. FAD is required as a cofactor.

It catalyses the reaction choline + A = betaine aldehyde + AH2. The enzyme catalyses betaine aldehyde + NAD(+) + H2O = glycine betaine + NADH + 2 H(+). It functions in the pathway amine and polyamine biosynthesis; betaine biosynthesis via choline pathway; betaine aldehyde from choline (cytochrome c reductase route): step 1/1. Functionally, involved in the biosynthesis of the osmoprotectant glycine betaine. Catalyzes the oxidation of choline to betaine aldehyde and betaine aldehyde to glycine betaine at the same rate. This is Oxygen-dependent choline dehydrogenase from Xanthomonas euvesicatoria pv. vesicatoria (strain 85-10) (Xanthomonas campestris pv. vesicatoria).